The sequence spans 135 residues: Ribonuclease P protein component (135 aa).

Belongs to the RnpA family. In terms of assembly, consists of a catalytic RNA component (M1 or rnpB) and a protein subunit.

It catalyses the reaction Endonucleolytic cleavage of RNA, removing 5'-extranucleotides from tRNA precursor.. In terms of biological role, RNaseP catalyzes the removal of the 5'-leader sequence from pre-tRNA to produce the mature 5'-terminus. It can also cleave other RNA substrates such as 4.5S RNA. The protein component plays an auxiliary but essential role in vivo by binding to the 5'-leader sequence and broadening the substrate specificity of the ribozyme. In Xylella fastidiosa (strain 9a5c), this protein is Ribonuclease P protein component.